A 393-amino-acid chain; its full sequence is Golgi membrane protein 1 (393 aa).

Position 1 is an N-acetylmethionine (Met1). The Cytoplasmic segment spans residues 1 to 12 (MMGLGNGRRSMK). The helical; Signal-anchor for type II membrane protein transmembrane segment at 13–35 (SPPLILAALVACVIVLGFNYWIA) threads the bilayer. Topologically, residues 36–393 (SSRSVELQTR…QVGIHIPQQA (358 aa)) are lumenal. A coiled-coil region spans residues 40–183 (VELQTRIVEL…IEEVIRKRNE (144 aa)). N-linked (GlcNAc...) asparagine glycosylation is found at Asn109 and Asn144. 2 disordered regions span residues 180-247 (KRNE…QVQN) and 284-352 (HTQL…LAGN). Ser187 is modified (phosphoserine). Polar residues-rich tracts occupy residues 192–201 (ETNNQHQQAL) and 227–247 (NKSQIPAPNSESLGLKPQVQN). An N-linked (GlcNAc...) asparagine glycan is attached at Asn227. Positions 294–320 (RPEEDSQYPEREQLVIRDRQEQQRASE) are enriched in basic and acidic residues. A compositionally biased stretch (acidic residues) spans 330 to 339 (DEYDMDENEA).

Belongs to the GOLM family. As to quaternary structure, interacts with DYM. Post-translationally, glycosylated. Phosphorylation sites are present in the extracellular medium.

The protein resides in the golgi apparatus. The protein localises to the cis-Golgi network membrane. Its function is as follows. Unknown. Cellular response protein to viral infection. In Mus musculus (Mouse), this protein is Golgi membrane protein 1 (Golm1).